The following is a 476-amino-acid chain: Glutamate--tRNA ligase 1 (476 aa).

Residues 9–19 (PSPTGFLHIGG) carry the 'HIGH' region motif. The short motif at 238–242 (KLSKR) is the 'KMSKS' region element. Residue lysine 241 participates in ATP binding.

It belongs to the class-I aminoacyl-tRNA synthetase family. Glutamate--tRNA ligase type 1 subfamily. Monomer.

The protein localises to the cytoplasm. The catalysed reaction is tRNA(Glu) + L-glutamate + ATP = L-glutamyl-tRNA(Glu) + AMP + diphosphate. In terms of biological role, catalyzes the attachment of glutamate to tRNA(Glu) in a two-step reaction: glutamate is first activated by ATP to form Glu-AMP and then transferred to the acceptor end of tRNA(Glu). The protein is Glutamate--tRNA ligase 1 of Bartonella bacilliformis (strain ATCC 35685 / KC583 / Herrer 020/F12,63).